We begin with the raw amino-acid sequence, 758 residues long: 5-methyltetrahydropteroyltriglutamate--homocysteine methyltransferase (758 aa).

Residues Arg-16 to Lys-19 and Lys-116 each bind 5-methyltetrahydropteroyltri-L-glutamate. L-homocysteine contacts are provided by residues Ile-436 to Ser-438 and Glu-489. Residues Ile-436–Ser-438 and Glu-489 contribute to the L-methionine site. Residues Arg-520–Cys-521 and Trp-566 contribute to the 5-methyltetrahydropteroyltri-L-glutamate site. L-homocysteine is bound at residue Asp-604. L-methionine is bound at residue Asp-604. Glu-610 is a binding site for 5-methyltetrahydropteroyltri-L-glutamate. His-646, Cys-648, and Glu-670 together coordinate Zn(2+). The Proton donor role is filled by His-699. Residue Cys-731 coordinates Zn(2+).

The protein belongs to the vitamin-B12 independent methionine synthase family. It depends on Zn(2+) as a cofactor.

It catalyses the reaction 5-methyltetrahydropteroyltri-L-glutamate + L-homocysteine = tetrahydropteroyltri-L-glutamate + L-methionine. It participates in amino-acid biosynthesis; L-methionine biosynthesis via de novo pathway; L-methionine from L-homocysteine (MetE route): step 1/1. In terms of biological role, catalyzes the transfer of a methyl group from 5-methyltetrahydrofolate to homocysteine resulting in methionine formation. The protein is 5-methyltetrahydropteroyltriglutamate--homocysteine methyltransferase of Nitrosococcus oceani (strain ATCC 19707 / BCRC 17464 / JCM 30415 / NCIMB 11848 / C-107).